We begin with the raw amino-acid sequence, 237 residues long: Sugar fermentation stimulation protein homolog (237 aa).

It belongs to the SfsA family.

This Pseudomonas syringae pv. tomato (strain ATCC BAA-871 / DC3000) protein is Sugar fermentation stimulation protein homolog.